The sequence spans 734 residues: Photosystem I P700 chlorophyll a apoprotein A2 (734 aa).

Helical transmembrane passes span 46 to 69 (IFASHFGQLAIIFLWTSGNLFHVA), 135 to 158 (LYTGAIFLLILSTISLIAGWLHLQ), 175 to 199 (LNHHLSGLFGVSSLAWTGHLVHVAI), 273 to 291 (IAHHHLAIAFIFLVAGHMY), 330 to 353 (IHFQLGLALASLGVITSLVAQHMY), 369 to 395 (AALYTHHQYIAGFIMTGAFAHGAIFFI), 417 to 439 (AIISHLSWASLFLGFHTLGLYVH), and 517 to 535 (FLVHHAIALGLHTTTLILV). [4Fe-4S] cluster-binding residues include Cys-559 and Cys-568. 2 helical membrane-spanning segments follow: residues 575-596 (AFYLAVFWMLNTIGWVTFYWHW) and 643-665 (LSVWAWMFLFGHLVWATGFMFLI). The chlorophyll a site is built by His-654, Met-662, and Tyr-670. A phylloquinone-binding site is contributed by Trp-671. The helical transmembrane segment at 707-727 (LVGLAHFSVGYIFTYAAFLIA) threads the bilayer.

This sequence belongs to the PsaA/PsaB family. In terms of assembly, the PsaA/B heterodimer binds the P700 chlorophyll special pair and subsequent electron acceptors. PSI consists of a core antenna complex that captures photons, and an electron transfer chain that converts photonic excitation into a charge separation. The eukaryotic PSI reaction center is composed of at least 11 subunits. It depends on P700 is a chlorophyll a/chlorophyll a' dimer, A0 is one or more chlorophyll a, A1 is one or both phylloquinones and FX is a shared 4Fe-4S iron-sulfur center. as a cofactor.

The protein resides in the plastid. It localises to the chloroplast thylakoid membrane. It catalyses the reaction reduced [plastocyanin] + hnu + oxidized [2Fe-2S]-[ferredoxin] = oxidized [plastocyanin] + reduced [2Fe-2S]-[ferredoxin]. In terms of biological role, psaA and PsaB bind P700, the primary electron donor of photosystem I (PSI), as well as the electron acceptors A0, A1 and FX. PSI is a plastocyanin-ferredoxin oxidoreductase, converting photonic excitation into a charge separation, which transfers an electron from the donor P700 chlorophyll pair to the spectroscopically characterized acceptors A0, A1, FX, FA and FB in turn. Oxidized P700 is reduced on the lumenal side of the thylakoid membrane by plastocyanin. The chain is Photosystem I P700 chlorophyll a apoprotein A2 from Phaseolus vulgaris (Kidney bean).